Here is a 414-residue protein sequence, read N- to C-terminus: TnpB-like protein MJ1635 (414 aa).

Cysteine 329, cysteine 332, cysteine 346, and cysteine 349 together coordinate Zn(2+).

This sequence in the N-terminal section; belongs to the transposase 2 family. It in the C-terminal section; belongs to the transposase 35 family.

In Methanocaldococcus jannaschii (strain ATCC 43067 / DSM 2661 / JAL-1 / JCM 10045 / NBRC 100440) (Methanococcus jannaschii), this protein is TnpB-like protein MJ1635.